A 781-amino-acid chain; its full sequence is Catalase-peroxidase (781 aa).

A signal peptide spans 1–20 (MLYIYYLFKSLFFHTLFVFS). The segment at residues 125–272 (WHSAGTYRIG…LAAVQMGLIY (148 aa)) is a cross-link (tryptophyl-tyrosyl-methioninium (Trp-Tyr) (with M-298)). The active-site Proton acceptor is the His126. Residues 237–256 (VHHPDEHRGAKEKAAKNSDS) are disordered. A cross-link (tryptophyl-tyrosyl-methioninium (Tyr-Met) (with W-125)) is located at residues 272 to 298 (YVNPEGPDGRPDPLASARDIRETFARM). His313 contributes to the heme b binding site. The segment at 317–336 (KTHGAAPADNVGPEPEAGEL) is disordered.

It belongs to the peroxidase family. Peroxidase/catalase subfamily. As to quaternary structure, homodimer or homotetramer. Requires heme b as cofactor. Post-translationally, formation of the three residue Trp-Tyr-Met cross-link is important for the catalase, but not the peroxidase activity of the enzyme.

It catalyses the reaction H2O2 + AH2 = A + 2 H2O. It carries out the reaction 2 H2O2 = O2 + 2 H2O. Its function is as follows. Bifunctional enzyme with both catalase and broad-spectrum peroxidase activity. In Xylella fastidiosa (strain 9a5c), this protein is Catalase-peroxidase.